A 164-amino-acid chain; its full sequence is MTTAFYPGSFDPITNGHVDVLVQALNVAEKVIVAIGIHPGKAPLFSFEERAELIRLSLAEALPGKSANITVVAFDNLVVDAARAHGATLLIRGLRDGTDLDYEMQMAGMNRTMAPDIQTIFLPAGTASRPITATLVRQIAAMGGDVSAFVPAAVLQALTSKRKA.

Serine 9 lines the substrate pocket. ATP is bound by residues 9–10 and histidine 17; that span reads SF. Substrate is bound by residues lysine 41, valine 78, and arginine 92. ATP-binding positions include 93 to 95, glutamate 103, and 128 to 134; these read GLR and SRPITAT.

This sequence belongs to the bacterial CoaD family. In terms of assembly, homohexamer. It depends on Mg(2+) as a cofactor.

It is found in the cytoplasm. It carries out the reaction (R)-4'-phosphopantetheine + ATP + H(+) = 3'-dephospho-CoA + diphosphate. The protein operates within cofactor biosynthesis; coenzyme A biosynthesis; CoA from (R)-pantothenate: step 4/5. Reversibly transfers an adenylyl group from ATP to 4'-phosphopantetheine, yielding dephospho-CoA (dPCoA) and pyrophosphate. The protein is Phosphopantetheine adenylyltransferase of Rhizobium etli (strain ATCC 51251 / DSM 11541 / JCM 21823 / NBRC 15573 / CFN 42).